The sequence spans 363 residues: Adenosine deaminase (363 aa).

2 residues coordinate Zn(2+): His-42 and His-44. A purine D-ribonucleoside is bound by residues 44–46 (HLD), Asp-172, and Gly-201. Residues 170–184 (IGDTGHEAANIKASA) form a gating helix loop; regulates binding affinity for substrates and thus substrate selectivity region. Position 226 (His-226) interacts with Zn(2+). A purine D-ribonucleoside-binding residues include Glu-229, His-253, and Asp-310. Asp-310 is a Zn(2+) binding site.

This sequence belongs to the metallo-dependent hydrolases superfamily. Adenosine and AMP deaminases family. The cofactor is Zn(2+).

The catalysed reaction is adenosine + H2O + H(+) = inosine + NH4(+). The enzyme catalyses S-methyl-5'-thioadenosine + H2O + H(+) = S-methyl-5'-thioinosine + NH4(+). The protein operates within purine metabolism; purine nucleoside salvage. With respect to regulation, inhibited by coformycin and methylthiocoformycin (MT-coformycin). Functionally, catalyzes the hydrolytic deamination of adenosine to produce inosine. Unlike mammalian adenosine deaminases, also catalyzes the deamination of 5'-methylthioadenosine (MTA), a by-product of polyamine biosynthesis, to produce 5'-methylthioinosine (MTI). Plays an essential role in the purine salvage pathway which allows the parasite to use host cell purines for the synthesis of nucleic acids. The chain is Adenosine deaminase from Plasmodium vivax (strain Salvador I).